Consider the following 408-residue polypeptide: Aminomethyltransferase, mitochondrial (408 aa).

The transit peptide at 1-30 (MRGGGLWQLGQSVTRRLAQAEKKVIARRCF) directs the protein to the mitochondrion. Substrate contacts are provided by Glu235, Arg266, and Tyr404.

This sequence belongs to the GcvT family. In terms of assembly, the glycine cleavage system is composed of four proteins: P, T, L and H.

The protein resides in the mitochondrion. The enzyme catalyses N(6)-[(R)-S(8)-aminomethyldihydrolipoyl]-L-lysyl-[protein] + (6S)-5,6,7,8-tetrahydrofolate = N(6)-[(R)-dihydrolipoyl]-L-lysyl-[protein] + (6R)-5,10-methylene-5,6,7,8-tetrahydrofolate + NH4(+). Functionally, the glycine cleavage system catalyzes the degradation of glycine. This Mesembryanthemum crystallinum (Common ice plant) protein is Aminomethyltransferase, mitochondrial (GDCST).